The sequence spans 417 residues: MSSEKIKLVDEVFGSVKNTITYEQLHNINGKFHNISDKFVENISESISEPTTINSKKKTSELIFSEETLNNVEIIDTEPYLSDYHKHAIDFENDVIMKEPILSLKSEQYTVHPIKYQKVWDNYKDQMKNYWTVEEVDLAKDVNDWNNHLSDDDRNFIMHVLAFFAAADGIVNANIKENLIDVVKIKEAECAYGFQYAMENAHGEMYSLMLTTFVKDDALRNKLINSIKTMPSIKKKADWCNKWIKSDKTYAHKLVAFSIVEGVFFSGSFASIFWLKTREMHVMPGLIISNQFIARDENKHVELACIMYSLLNNRLKESVVYQIIDEAIEIEEEFINDSLPCKLLGMNSELMSQYIKYVADRLLVDLGYRKKFNVDNPFEYMKKIDVFVKANFFEKRNDAYSNANIDNEKKIVFLENF.

Fe cation contacts are provided by aspartate 168, glutamate 199, and histidine 202. The active site involves tyrosine 206. Glutamate 261, glutamate 297, and histidine 300 together coordinate Fe cation.

Belongs to the ribonucleoside diphosphate reductase small chain family. Heterotetramer composed of a homodimer of the large subunit (R1) and a homodimer of the small subunit (R2). Larger multisubunit protein complex are also active, composed of (R1)n(R2)n. It depends on Fe cation as a cofactor.

It catalyses the reaction a 2'-deoxyribonucleoside 5'-diphosphate + [thioredoxin]-disulfide + H2O = a ribonucleoside 5'-diphosphate + [thioredoxin]-dithiol. Its function is as follows. Ribonucleoside-diphosphate reductase holoenzyme provides the precursors necessary for viral DNA synthesis. Allows virus growth in non-dividing cells. Catalyzes the biosynthesis of deoxyribonucleotides from the corresponding ribonucleotides. In Acanthamoeba polyphaga mimivirus (APMV), this protein is Ribonucleoside-diphosphate reductase small chain (RNR2).